The primary structure comprises 157 residues: MQKIGIYPGTFDPVTNGHIDIIHRSSELFEKLIVAVAHSSAKNPMFSLDERLKMMQLATKSFKNVECVAFEGLLADLAKEYHCKVLVRGLRVVSDFEYELQMGYANKSLNHELETLYFMPTLQNAFISSSIVRSIIAHKGDASHLVPKEIYPFISKV.

T10 is a substrate binding site. ATP contacts are provided by residues 10 to 11 (TF) and H18. Substrate is bound by residues K42, L74, and R88. Residues 89–91 (GLR), E99, and 124–130 (NAFISSS) contribute to the ATP site.

The protein belongs to the bacterial CoaD family. Homohexamer. Mg(2+) is required as a cofactor.

The protein resides in the cytoplasm. The enzyme catalyses (R)-4'-phosphopantetheine + ATP + H(+) = 3'-dephospho-CoA + diphosphate. The protein operates within cofactor biosynthesis; coenzyme A biosynthesis; CoA from (R)-pantothenate: step 4/5. Its function is as follows. Reversibly transfers an adenylyl group from ATP to 4'-phosphopantetheine, yielding dephospho-CoA (dPCoA) and pyrophosphate. The polypeptide is Phosphopantetheine adenylyltransferase (Helicobacter pylori (strain J99 / ATCC 700824) (Campylobacter pylori J99)).